The sequence spans 263 residues: Post-GPI attachment to proteins factor 2 (263 aa).

6 consecutive transmembrane segments (helical) span residues 16–36 (FVFCIGGLPSSALLICVLLSL), 69–89 (YIWRILIGLHIGPRLVVAVAF), 109–129 (FLCNIACGLNLLENFFLLALT), 143–163 (CFGGFAISSIIYMILSTWLFS), 180–200 (YKILGASIFVVCFFLGGYLYW), and 208–228 (PGIYTLFALVEYSAVLSNIFF).

Belongs to the PGAP2 family.

Its subcellular location is the golgi apparatus membrane. It localises to the endoplasmic reticulum membrane. In terms of biological role, involved in the lipid remodeling steps of GPI-anchor maturation. Required for stable expression of GPI-anchored proteins at the cell surface. This chain is Post-GPI attachment to proteins factor 2, found in Caenorhabditis briggsae.